A 213-amino-acid chain; its full sequence is UPF0502 protein Daro_2469 (213 aa).

The protein belongs to the UPF0502 family.

This Dechloromonas aromatica (strain RCB) protein is UPF0502 protein Daro_2469.